Consider the following 135-residue polypeptide: AVCVSLLGAANIPPQSLNLYQFKNMIECAGTRTWLAYVKYGCYCGPGGTGTPLDELDRCCQTHDHCYDNAKKFGNCIPYLKTYVYTCNKPDITCTGAKGSCGRNVCDCDRAAAICFAAAPYNLANFGIDKEKHCQ.

7 disulfides stabilise this stretch: cysteine 28-cysteine 87, cysteine 42-cysteine 134, cysteine 44-cysteine 60, cysteine 59-cysteine 115, cysteine 66-cysteine 108, cysteine 76-cysteine 101, and cysteine 94-cysteine 106. Tyrosine 43, glycine 45, and glycine 47 together coordinate Ca(2+). Histidine 63 is an active-site residue. Aspartate 64 contributes to the Ca(2+) binding site. The active site involves aspartate 109.

This sequence belongs to the phospholipase A2 family. Group I subfamily. D49 sub-subfamily. Ca(2+) is required as a cofactor. In terms of tissue distribution, expressed by the venom gland.

It localises to the secreted. It catalyses the reaction a 1,2-diacyl-sn-glycero-3-phosphocholine + H2O = a 1-acyl-sn-glycero-3-phosphocholine + a fatty acid + H(+). Its function is as follows. Snake venom phospholipase A2 (PLA2) that inhibits neuromuscular transmission by blocking acetylcholine release from the nerve termini. PLA2 catalyzes the calcium-dependent hydrolysis of the 2-acyl groups in 3-sn-phosphoglycerides. Very weakly suppress the acetylcholine (ACh)-evoked current mediated by alpha-7-similar nAChRs in L.stagnalis neurons. The chain is Basic phospholipase A2 6 from Bungarus fasciatus (Banded krait).